A 573-amino-acid chain; its full sequence is Delta 8-(E)-sphingolipid desaturase (573 aa).

Residues 2 to 77 form the Cytochrome b5 heme-binding domain; it reads SRVLSRRDIA…FKIWKIGRID (76 aa). Heme contacts are provided by His37 and His60. A helical membrane pass occupies residues 228-248; sequence LFGISFYLLSLKWFAISAICL. A Histidine box-1 motif is present at residues 260–264; the sequence is HDAGH. The chain crosses the membrane as a helical span at residues 273 to 293; it reads VDNIIGMTVASWIGGLSLGWW. Positions 297–301 match the Histidine box-2 motif; it reads HNVHH. 3 helical membrane passes run 353-372, 393-413, and 422-442; these read YLYYPILCFGRFNLYRLSWM, LAGLSFFNYWFFYLIIYKQMP, and VMISHIATMIVHVQITLSHFA. The short motif at 481–485 is the Histidine box-3 element; sequence QVIHH.

The protein belongs to the fatty acid desaturase type 1 family.

The protein localises to the membrane. It carries out the reaction an N-acylsphing-4-enine + 2 Fe(II)-[cytochrome b5] + O2 + 2 H(+) = a (4E,8E)-4-sphinga-4,8-dienine ceramide + 2 Fe(III)-[cytochrome b5] + 2 H2O. It participates in lipid metabolism; sphingolipid metabolism. Functionally, delta(8)-fatty-acid desaturase which introduces a double bond at the 8-position in the long-chain base (LCB) of ceramides. Required for the formation of the di-unsaturated sphingoid base (E,E)-sphinga-4,8-dienine during glucosylceramide (GluCer) biosynthesis. In Kluyveromyces lactis (strain ATCC 8585 / CBS 2359 / DSM 70799 / NBRC 1267 / NRRL Y-1140 / WM37) (Yeast), this protein is Delta 8-(E)-sphingolipid desaturase.